Here is a 569-residue protein sequence, read N- to C-terminus: MRLHRLRARLNAVAFGLLLLLVHGQGPEIVQPEVDTTLGRVRGRQVGVKGTDRLVNVFLGIPFAQPPLGPDRFSAPHPAQPWEGVRDASAAPPMCLQDVESMNNSRFVLNGKQQIFSVSEDCLVLNIYSPAEATAGAGRPVMVWVHGGALITGAATSYDGSALAAYGDVVVVTVQYRLGVLGFFSTGDEHAPGNQGFLDVVAALRWVQGNITPFGGDLNCVTVFGGSAGGSIVSGLVLSPMAAGLFHRAITQSGVITTPGIIESHPWPLAQKITNTLACSSSSPAEMVQCLRQKEGEELVLSKKLKSTIYPLTVDGTVFPKSPKELLKEKPFHSVPFLMGVNNHEFSWLIPRGWGLLDTMEQMSREDMLAISTPVLTSLDVPPEMMPTVIDEYLGSNSDAQAKCLAFQEFMGDVFINVPTVSFSRYLRDSGSPVFFYEFQHRPSSFAKIKPAWVKADHAAEGAFVFGGPFLMDESSRLAFPEATEEEKQLSLTMMAQWTHFARTGDPNSKGLPPWPRFNQAEQYLEINPVPRAGQKFRETRMQFWSETLPSKIQQWHQKQKNRKAQEDL.

A signal peptide spans 1-24; it reads MRLHRLRARLNAVAFGLLLLLVHG. Cys95 and Cys122 are joined by a disulfide. Asn103 is a glycosylation site (N-linked (GlcNAc...) asparagine). Residue Ser227 is the Acyl-ester intermediate of the active site. A disulfide bridge links Cys279 with Cys290. Active-site charge relay system residues include Glu345 and His458. A Prevents secretion from ER motif is present at residues 566-569; the sequence is QEDL.

Belongs to the type-B carboxylesterase/lipase family. Post-translationally, N-glycosylated.

The protein resides in the endoplasmic reticulum lumen. It carries out the reaction a carboxylic ester + H2O = an alcohol + a carboxylate + H(+). Involved in the detoxification of xenobiotics and in the activation of ester and amide prodrugs. This chain is Carboxylesterase 3 (CES3), found in Pongo abelii (Sumatran orangutan).